We begin with the raw amino-acid sequence, 419 residues long: Haloacid dehalogenase-like hydrolase domain-containing 5 (419 aa).

The signal sequence occupies residues 1 to 15; it reads MAALAGLGVLGAGRH.

It belongs to the HAD-like hydrolase superfamily.

The polypeptide is Haloacid dehalogenase-like hydrolase domain-containing 5 (Mus musculus (Mouse)).